Here is a 134-residue protein sequence, read N- to C-terminus: ATP synthase epsilon chain (134 aa).

The protein belongs to the ATPase epsilon chain family. F-type ATPases have 2 components, CF(1) - the catalytic core - and CF(0) - the membrane proton channel. CF(1) has five subunits: alpha(3), beta(3), gamma(1), delta(1), epsilon(1). CF(0) has three main subunits: a, b and c.

It localises to the cell membrane. Functionally, produces ATP from ADP in the presence of a proton gradient across the membrane. This Staphylococcus saprophyticus subsp. saprophyticus (strain ATCC 15305 / DSM 20229 / NCIMB 8711 / NCTC 7292 / S-41) protein is ATP synthase epsilon chain.